Reading from the N-terminus, the 375-residue chain is RING-H2 finger protein ATL16 (375 aa).

Positions 1-20 (MDLSNRRNPLRDLSFPPPPP) are disordered. Residues 39 to 59 (VAVIGILATAFLLVSYYVFVI) form a helical membrane-spanning segment. The RING-type; atypical zinc finger occupies 138-180 (CSVCLSEFQDEEKLRIIPNCSHLFHIDCIDVWLQNNANCPLCR). Disordered stretches follow at residues 223-266 (GSDR…DRGG) and 356-375 (SFGSSRRSRSSSKLPLYFEP). The segment covering 238-257 (QERSNSGYLLNENTQNSISP) has biased composition (polar residues).

Belongs to the RING-type zinc finger family. ATL subfamily.

It localises to the membrane. It carries out the reaction S-ubiquitinyl-[E2 ubiquitin-conjugating enzyme]-L-cysteine + [acceptor protein]-L-lysine = [E2 ubiquitin-conjugating enzyme]-L-cysteine + N(6)-ubiquitinyl-[acceptor protein]-L-lysine.. It participates in protein modification; protein ubiquitination. The sequence is that of RING-H2 finger protein ATL16 (ATL16) from Arabidopsis thaliana (Mouse-ear cress).